A 467-amino-acid polypeptide reads, in one-letter code: Ribosomal protein uS12 methylthiotransferase RimO (467 aa).

Residues 1 to 27 are disordered; it reads MTSNPPDLRPDLAPKPTFGTAPRPDQP. The region spanning 27–137 is the MTTase N-terminal domain; sequence PTLGMVSLGC…VLDAVHAAVP (111 aa). Positions 36, 72, 101, 168, 172, and 175 each coordinate [4Fe-4S] cluster. Residues 154-397 enclose the Radical SAM core domain; it reads LTPRHFSYLK…MEKAQAISEA (244 aa). One can recognise a TRAM domain in the interval 400–467; it reads ASKVGQTLQV…GEYDLWGALR (68 aa).

Belongs to the methylthiotransferase family. RimO subfamily. It depends on [4Fe-4S] cluster as a cofactor.

It is found in the cytoplasm. It catalyses the reaction L-aspartate(89)-[ribosomal protein uS12]-hydrogen + (sulfur carrier)-SH + AH2 + 2 S-adenosyl-L-methionine = 3-methylsulfanyl-L-aspartate(89)-[ribosomal protein uS12]-hydrogen + (sulfur carrier)-H + 5'-deoxyadenosine + L-methionine + A + S-adenosyl-L-homocysteine + 2 H(+). Catalyzes the methylthiolation of an aspartic acid residue of ribosomal protein uS12. The polypeptide is Ribosomal protein uS12 methylthiotransferase RimO (Ruegeria sp. (strain TM1040) (Silicibacter sp.)).